We begin with the raw amino-acid sequence, 441 residues long: Diuretic hormone receptor (441 aa).

Residues Asn99, Asn107, and Asn112 are each glycosylated (N-linked (GlcNAc...) asparagine). The chain crosses the membrane as a helical span at residues 135–158; the sequence is FVFFVGFCLSLVAIAVAIWIFLYF. Residues 159-166 are Cytoplasmic-facing; the sequence is KDLRCLRN. The chain crosses the membrane as a helical span at residues 167–187; it reads TIHTNLMATYICNDATWIISA. At 188–194 the chain is on the extracellular side; it reads VVQEYVE. Residues 195-224 traverse the membrane as a helical segment; that stretch reads NGGLCSVLAVLMHYFYLTNFFWMFVEGLYL. Over 225–238 the chain is Cytoplasmic; it reads FLLVVATFTGEKVK. The chain crosses the membrane as a helical span at residues 239-260; the sequence is LQIYIIIGWGIPGVIVVTWAII. The Extracellular segment spans residues 261 to 291; that stretch reads KHLGKTAPDNAGESHPMVLLIKHCPWMAEDY. Residues 292–315 form a helical membrane-spanning segment; sequence FDWIHQAPVITVLAVNLVFLFSIM. Topologically, residues 316 to 338 are cytoplasmic; the sequence is WVLITKLQSANTAETQQYRKATK. Residues 339 to 357 traverse the membrane as a helical segment; the sequence is ALLVLFPLLGITYILMMQG. The Extracellular segment spans residues 358 to 371; the sequence is PMDGVAGHVFRNAQ. A helical transmembrane segment spans residues 372–391; the sequence is ALLLSLQGFTVALFYCFLNT. At 392–441 the chain is on the cytoplasmic side; it reads EVQNTLRHRMSRWRETRTVGGGRRYTLSGHSKDWSPRSRTESIRCLQHRS.

The protein belongs to the G-protein coupled receptor 2 family. In terms of tissue distribution, expressed in Malpighian tubules.

The protein resides in the cell membrane. Functionally, receptor for the insect diurectic hormone. The activity of this receptor is mediated by G proteins which activate adenylyl cyclase. In Acheta domesticus (House cricket), this protein is Diuretic hormone receptor.